The sequence spans 40 residues: RapK inhibitor (40 aa).

2 propeptides span residues 1–34 (MKKL…IQVA) and Gly-40.

The protein belongs to the Phr family. Post-translationally, contains a predicted signal peptide cleavage site in the N-terminal region, however the propeptide is probably only subject to processing events at the ends of the mature peptide.

The protein localises to the secreted. The protein resides in the cytoplasm. Its function is as follows. Signaling molecule involved in the regulation of genetic competence development. Secreted during production, but the mature peptide acts intracellularly, indicating that it needs to be imported into the cell to function. Stimulates expression of the genes controlled by ComA, a transcriptional factor that regulates the development of genetic competence. Acts by inhibiting RapK, which regulates the activity of ComA. In Bacillus subtilis (strain 168), this protein is RapK inhibitor (phrK).